We begin with the raw amino-acid sequence, 968 residues long: RNA polymerase-associated protein RapA (968 aa).

The 171-residue stretch at Asp164–Asp334 folds into the Helicase ATP-binding domain. ATP is bound at residue Asp177–Thr184. The short motif at Asp280–His283 is the DEAH box element. One can recognise a Helicase C-terminal domain in the interval Arg490–Tyr643.

It belongs to the SNF2/RAD54 helicase family. RapA subfamily. As to quaternary structure, interacts with the RNAP. Has a higher affinity for the core RNAP than for the holoenzyme. Its ATPase activity is stimulated by binding to RNAP.

Functionally, transcription regulator that activates transcription by stimulating RNA polymerase (RNAP) recycling in case of stress conditions such as supercoiled DNA or high salt concentrations. Probably acts by releasing the RNAP, when it is trapped or immobilized on tightly supercoiled DNA. Does not activate transcription on linear DNA. Probably not involved in DNA repair. The polypeptide is RNA polymerase-associated protein RapA (Erwinia tasmaniensis (strain DSM 17950 / CFBP 7177 / CIP 109463 / NCPPB 4357 / Et1/99)).